The following is a 672-amino-acid chain: uncharacterized protein (672 aa).

This sequence belongs to the MG032/MG096/MG288 family.

This is an uncharacterized protein from Mycoplasma pneumoniae (strain ATCC 29342 / M129 / Subtype 1) (Mycoplasmoides pneumoniae).